A 299-amino-acid chain; its full sequence is Zinc finger protein 414 (299 aa).

2 stretches are compositionally biased toward polar residues: residues 1–20 (MEEP…SSSG) and 69–81 (DSCQ…TGVG). The interval 1-98 (MEEPSRPSSD…PRRRPPPGKQ (98 aa)) is disordered. 2 consecutive C2H2-type zinc fingers follow at residues 99 to 123 (IPCS…LRTH) and 135 to 159 (FRCS…GKLH). The C2H2-type 3; degenerate zinc finger occupies 166-190 (FKCENCLLRFRTHRSLFKHLHVCID). 2 disordered regions span residues 193–228 (QNPA…PFPL) and 254–299 (PRLR…GACR). Residues 203 to 215 (LDKEPPVPERPPE) are compositionally biased toward basic and acidic residues. Residues 217-228 (DPSSSLGLPFPL) are compositionally biased toward low complexity.

It belongs to the krueppel C2H2-type zinc-finger protein family.

The protein localises to the nucleus. Its function is as follows. May be involved in transcriptional regulation. This is Zinc finger protein 414 (Znf414) from Mus musculus (Mouse).